The primary structure comprises 83 residues: ATP synthase subunit c, chloroplastic (83 aa).

Transmembrane regions (helical) follow at residues 3 to 23 (PIIS…AAIG) and 57 to 77 (LAFM…LLFA).

It belongs to the ATPase C chain family. In terms of assembly, F-type ATPases have 2 components, F(1) - the catalytic core - and F(0) - the membrane proton channel. F(1) has five subunits: alpha(3), beta(3), gamma(1), delta(1), epsilon(1). F(0) has four main subunits: a(1), b(1), b'(1) and c(10-14). The alpha and beta chains form an alternating ring which encloses part of the gamma chain. F(1) is attached to F(0) by a central stalk formed by the gamma and epsilon chains, while a peripheral stalk is formed by the delta, b and b' chains.

It localises to the plastid. The protein localises to the chloroplast thylakoid membrane. F(1)F(0) ATP synthase produces ATP from ADP in the presence of a proton or sodium gradient. F-type ATPases consist of two structural domains, F(1) containing the extramembraneous catalytic core and F(0) containing the membrane proton channel, linked together by a central stalk and a peripheral stalk. During catalysis, ATP synthesis in the catalytic domain of F(1) is coupled via a rotary mechanism of the central stalk subunits to proton translocation. Functionally, key component of the F(0) channel; it plays a direct role in translocation across the membrane. A homomeric c-ring of between 10-14 subunits forms the central stalk rotor element with the F(1) delta and epsilon subunits. The chain is ATP synthase subunit c, chloroplastic from Diacronema lutheri (Unicellular marine alga).